The sequence spans 468 residues: Siroheme synthase 1 (468 aa).

Residues 1-204 are precorrin-2 dehydrogenase /sirohydrochlorin ferrochelatase; that stretch reads MDYLPIFCRL…GDKASANQLA (204 aa). NAD(+) contacts are provided by residues 22–23 and 43–44; these read EV and PA. Ser-128 is subject to Phosphoserine. The segment at 216-468 is uroporphyrinogen-III C-methyltransferase; it reads GEVILVGAGP…NHGVQAAALA (253 aa). Pro-225 serves as a coordination point for S-adenosyl-L-methionine. Asp-248 acts as the Proton acceptor in catalysis. Catalysis depends on Lys-270, which acts as the Proton donor. S-adenosyl-L-methionine contacts are provided by residues 301–303, Ile-306, 331–332, Met-383, and Gly-412; these read GGD and TA.

In the N-terminal section; belongs to the precorrin-2 dehydrogenase / sirohydrochlorin ferrochelatase family. It in the C-terminal section; belongs to the precorrin methyltransferase family.

It catalyses the reaction uroporphyrinogen III + 2 S-adenosyl-L-methionine = precorrin-2 + 2 S-adenosyl-L-homocysteine + H(+). It carries out the reaction precorrin-2 + NAD(+) = sirohydrochlorin + NADH + 2 H(+). The catalysed reaction is siroheme + 2 H(+) = sirohydrochlorin + Fe(2+). The protein operates within cofactor biosynthesis; adenosylcobalamin biosynthesis; precorrin-2 from uroporphyrinogen III: step 1/1. It functions in the pathway cofactor biosynthesis; adenosylcobalamin biosynthesis; sirohydrochlorin from precorrin-2: step 1/1. Its pathway is porphyrin-containing compound metabolism; siroheme biosynthesis; precorrin-2 from uroporphyrinogen III: step 1/1. It participates in porphyrin-containing compound metabolism; siroheme biosynthesis; siroheme from sirohydrochlorin: step 1/1. The protein operates within porphyrin-containing compound metabolism; siroheme biosynthesis; sirohydrochlorin from precorrin-2: step 1/1. Functionally, multifunctional enzyme that catalyzes the SAM-dependent methylations of uroporphyrinogen III at position C-2 and C-7 to form precorrin-2 via precorrin-1. Then it catalyzes the NAD-dependent ring dehydrogenation of precorrin-2 to yield sirohydrochlorin. Finally, it catalyzes the ferrochelation of sirohydrochlorin to yield siroheme. This Aeromonas salmonicida (strain A449) protein is Siroheme synthase 1.